The chain runs to 138 residues: Transcription antitermination protein NusB (138 aa).

This sequence belongs to the NusB family.

Functionally, involved in transcription antitermination. Required for transcription of ribosomal RNA (rRNA) genes. Binds specifically to the boxA antiterminator sequence of the ribosomal RNA (rrn) operons. In Photorhabdus laumondii subsp. laumondii (strain DSM 15139 / CIP 105565 / TT01) (Photorhabdus luminescens subsp. laumondii), this protein is Transcription antitermination protein NusB.